Reading from the N-terminus, the 302-residue chain is MTRKNNALPKARTLIEALPWLTRHHGKTIVVKFGGNAMVNEELKGAFARPSFLVHHAGLRPVVVHGGGPQISAELDRYGLVSEFKAGLRVTTDEAMDVVRMVLAGQVQRDVWGCSIVHGPLAVGITGEDAHPISATRHRPLIDGEPVDIGRVGEVTRIDTGAVLALLEDGRIPVVSSIARAEDDGHVYNVNADTAAAALAAALGAETLMVLTDVEGLYEDWPNSDEVISRLTASELETLLPDLSSGMVPKMEGCLHAVRNGVRTARVIDGRVPHSILLEIFTDDGVGTMVVPDEPSVSEGTS.

Residues 67–68 (GG), R89, and N189 contribute to the substrate site.

Belongs to the acetylglutamate kinase family. ArgB subfamily.

It is found in the cytoplasm. The catalysed reaction is N-acetyl-L-glutamate + ATP = N-acetyl-L-glutamyl 5-phosphate + ADP. Its pathway is amino-acid biosynthesis; L-arginine biosynthesis; N(2)-acetyl-L-ornithine from L-glutamate: step 2/4. In terms of biological role, catalyzes the ATP-dependent phosphorylation of N-acetyl-L-glutamate. This is Acetylglutamate kinase from Streptomyces clavuligerus.